The chain runs to 84 residues: Large ribosomal subunit protein bL27 (84 aa).

Positions 1–25 (MAHKKAGGSSRNGRDSNGQRRGVKR) are disordered.

It belongs to the bacterial ribosomal protein bL27 family.

The chain is Large ribosomal subunit protein bL27 from Desulfatibacillum aliphaticivorans.